The sequence spans 1139 residues: Autophagy-related protein 23 (1139 aa).

9 disordered regions span residues 1–148, 225–327, 356–388, 475–569, 648–674, 720–767, 786–828, 935–961, and 977–1012; these read MFQR…EMSP, STDK…YDDE, LTTA…SVKD, KNEK…DTAG, KKIS…KTEY, RQES…RETE, EDAQ…SKLR, AAVE…TEDL, and HERD…ELRT. Residues 7-18 show a composition bias toward basic and acidic residues; the sequence is SAIDRTIAEEQA. A compositionally biased stretch (low complexity) spans 19 to 37; sequence RQQTATQSRSPSRTGSTSS. 2 coiled-coil regions span residues 142–170 and 215–259; these read KLQE…LLRS and DMVM…STDQ. Composition is skewed to basic and acidic residues over residues 225–247, 261–273, 373–385, and 475–494; these read STDK…KLEE, KTSD…DAQD, ATRE…DVAS, and KNEK…KLES. Residues 323–495 are a coiled coil; it reads SYDDEIPQLQ…TDLTKKLESK (173 aa). The segment covering 496-522 has biased composition (low complexity); that stretch reads PAPAMLTPAATPMPTVLQPAATSATAA. A compositionally biased stretch (basic residues) spans 526–537; sequence GKKKNNKKKKGK. A coiled-coil region spans residues 566 to 1067; sequence DTAGNAELKA…AAQTKLVASS (502 aa). The span at 651-661 shows a compositional bias: low complexity; that stretch reads SSSTSDAEASS. Basic and acidic residues-rich tracts occupy residues 728-767, 786-815, 935-945, and 977-1011; these read ATKE…RETE, EDAQ…KAEQ, AAVEERDRIED, and HERD…DELR. Positions 1082 to 1132 constitute a GRIP domain; that stretch reads SPAGAPDTVYLKTILLQFLEQKDTKLRAQLVPVLGKLLRFDKTDEQKWQKA.

This sequence belongs to the ATG23 family. Forms a complex with ATG9 and ATG27.

Its subcellular location is the cytoplasm. The protein localises to the preautophagosomal structure membrane. Required for cytoplasm to vacuole transport (Cvt) vesicle formation and efficient autophagy. Plays a role in ATG protein retrieval from the pre-autophagosomal structure (PAS) and is especially required for autophagy-dependent cycling of ATG9. Autophagy is required for proper vegetative growth, asexual/sexual reproduction, and full virulence. Autophagy is particularly involved in the biosynthesis of deoxynivalenol (DON), an important virulence determinant. The protein is Autophagy-related protein 23 of Gibberella zeae (strain ATCC MYA-4620 / CBS 123657 / FGSC 9075 / NRRL 31084 / PH-1) (Wheat head blight fungus).